We begin with the raw amino-acid sequence, 235 residues long: Large ribosomal subunit protein uL1 (235 aa).

It belongs to the universal ribosomal protein uL1 family. In terms of assembly, part of the 50S ribosomal subunit.

Functionally, binds directly to 23S rRNA. The L1 stalk is quite mobile in the ribosome, and is involved in E site tRNA release. Protein L1 is also a translational repressor protein, it controls the translation of the L11 operon by binding to its mRNA. The chain is Large ribosomal subunit protein uL1 from Fusobacterium nucleatum subsp. nucleatum (strain ATCC 25586 / DSM 15643 / BCRC 10681 / CIP 101130 / JCM 8532 / KCTC 2640 / LMG 13131 / VPI 4355).